We begin with the raw amino-acid sequence, 219 residues long: Imidazole glycerol phosphate synthase subunit HisH (219 aa).

The region spanning 4–216 is the Glutamine amidotransferase type-1 domain; the sequence is TVTVLDYGSG…VDSLPATGRN (213 aa). The active-site Nucleophile is Cys-82. Residues His-191 and Glu-193 contribute to the active site.

As to quaternary structure, heterodimer of HisH and HisF.

Its subcellular location is the cytoplasm. The enzyme catalyses 5-[(5-phospho-1-deoxy-D-ribulos-1-ylimino)methylamino]-1-(5-phospho-beta-D-ribosyl)imidazole-4-carboxamide + L-glutamine = D-erythro-1-(imidazol-4-yl)glycerol 3-phosphate + 5-amino-1-(5-phospho-beta-D-ribosyl)imidazole-4-carboxamide + L-glutamate + H(+). It catalyses the reaction L-glutamine + H2O = L-glutamate + NH4(+). It functions in the pathway amino-acid biosynthesis; L-histidine biosynthesis; L-histidine from 5-phospho-alpha-D-ribose 1-diphosphate: step 5/9. Its function is as follows. IGPS catalyzes the conversion of PRFAR and glutamine to IGP, AICAR and glutamate. The HisH subunit catalyzes the hydrolysis of glutamine to glutamate and ammonia as part of the synthesis of IGP and AICAR. The resulting ammonia molecule is channeled to the active site of HisF. This is Imidazole glycerol phosphate synthase subunit HisH from Renibacterium salmoninarum (strain ATCC 33209 / DSM 20767 / JCM 11484 / NBRC 15589 / NCIMB 2235).